A 334-amino-acid chain; its full sequence is Proline-serine-threonine phosphatase-interacting protein 2 (334 aa).

In terms of domain architecture, F-BAR spans 4–264; that stretch reads SLFKGNFWSA…SLEMCSIQRD (261 aa). A coiled-coil region spans residues 66 to 166; that stretch reads GQSEINTLKR…AVSRSANLVN (101 aa). The segment at 295-322 is disordered; that stretch reads VPAGKATGPNLARRGPLPIPKSSPDDPN. Y323 and Y329 each carry phosphotyrosine.

In terms of processing, phosphorylated on tyrosine.

The protein resides in the cytoplasm. The protein localises to the membrane. Its function is as follows. Binds to F-actin. May be involved in regulation of the actin cytoskeleton. The protein is Proline-serine-threonine phosphatase-interacting protein 2 (PSTPIP2) of Homo sapiens (Human).